A 165-amino-acid polypeptide reads, in one-letter code: Small ribosomal subunit protein uS5 (165 aa).

An S5 DRBM domain is found at 13 to 76 (LEEKVLVVNR…EAARKNLITI (64 aa)).

This sequence belongs to the universal ribosomal protein uS5 family. As to quaternary structure, part of the 30S ribosomal subunit. Contacts proteins S4 and S8.

Its function is as follows. With S4 and S12 plays an important role in translational accuracy. In terms of biological role, located at the back of the 30S subunit body where it stabilizes the conformation of the head with respect to the body. This Chlamydia caviae (strain ATCC VR-813 / DSM 19441 / 03DC25 / GPIC) (Chlamydophila caviae) protein is Small ribosomal subunit protein uS5.